We begin with the raw amino-acid sequence, 269 residues long: Lck-interacting transmembrane adapter 1 (269 aa).

Residues 1 to 7 lie on the Extracellular side of the membrane; it reads MRPPVPS. Residues 8–28 traverse the membrane as a helical; Signal-anchor for type III membrane protein segment; sequence APLALWVLGCFSLLLWLWALC. 2 S-palmitoyl cysteine lipidation sites follow: C28 and C31. Over 29-269 the chain is Cytoplasmic; that stretch reads TACHRKRAQR…VYESIKEMGL (241 aa). The segment at 102–133 is disordered; sequence STRSQVPNSAFPPRQLPRAPPAAPATAPSTSS. Over residues 115–124 the composition is skewed to pro residues; it reads RQLPRAPPAA. Y137, Y175, and Y207 each carry phosphotyrosine. Positions 137–140 are interaction with GRB2; that stretch reads YSNV. 2 interaction with CSK regions span residues 175-178 and 207-210; these read YACI and YSRV. Residues Y242 and Y261 each carry the phosphotyrosine; by LYN or LCK modification. The interval 242–245 is interaction with LCK and PIK3R1; that stretch reads YEAI. An interaction with LCK, PLCG2 and PIK3R1 region spans residues 261–264; it reads YESI. S263 carries the phosphoserine modification.

In terms of assembly, when phosphorylated in response to TCR stimulation and/or CD4 costimulation, interacts with LCK, CSK, FYN, PTPN11/SHP2, GRB2, PIK3R1 and GRAP2. When phosphorylated in response to BCR activation, interacts with LYN, PIK3R1, PLCG2 and GRB2. In terms of processing, palmitoylation of Cys-28 and Cys-31 is required for raft targeting. Phosphorylated on tyrosines upon TCR activation and/or CD4 coreceptor stimulation, or upon BCR stimulation; which leads to the recruitment of SH2-containing proteins. As to expression, expressed in spleen and lung. Present in primary B-cells and peripheral T-cells (at protein level).

Its subcellular location is the cell membrane. Its function is as follows. Involved in BCR (B-cell antigen receptor)-mediated signaling in B-cells and TCR (T-cell antigen receptor)-mediated T-cell signaling in T-cells. In absence of TCR signaling, may be involved in CD4-mediated inhibition of T-cell activation. Couples activation of these receptors and their associated kinases with distal intracellular events such as calcium mobilization or MAPK activation through the recruitment of PLCG2, GRB2, GRAP2, and other signaling molecules. The sequence is that of Lck-interacting transmembrane adapter 1 (Lime1) from Mus musculus (Mouse).